The sequence spans 164 residues: TVATILTILASTCMARNVLVNNEGLYAGQSLVVEQYTFIMQDDCNLVLYEYSTPIWASNTGVTGKNGCRAVMQADGNFVVYDVKGRAVWASNSRRGNGNYILVLQKDRNVVIYGSDIWSTGTYRKKVGGTVVMAMNGTVDGGSVVGPVTVNQNVTAVRKVAAAA.

Residues 1 to 15 (TVATILTILASTCMA) form the signal peptide. Positions 16–125 (RNVLVNNEGL…DIWSTGTYRK (110 aa)) constitute a Bulb-type lectin domain. Cys44 and Cys68 are oxidised to a cystine.

In terms of assembly, homotetramer. In terms of processing, not glycosylated.

Mannose-specific lectin. Induces a Th1-type immune response in vitro. Causes a 4-fold increase in the proliferation of murine thymocytes and a significant increase in the production of nitric oxide at 24 hours in a macrophage cell line. Stimulates the production of the pro-inflammatory cytokines TNF and IL12 by rat peritoneal macrophages in a dose-dependent manner and of the cytokines IFNG and IL2 in murine thymocytes. Has hemagglutination activity towards rabbit erythrocytes. This Allium cepa (Onion) protein is Lectin.